We begin with the raw amino-acid sequence, 195 residues long: Nucleoid occlusion factor SlmA (195 aa).

Residues 6 to 66 (PSRRESILQA…ALIEFAEEAV (61 aa)) form the HTH tetR-type domain. Residues 29–48 (TTAGLAKTVGVTEAALYRHF) constitute a DNA-binding region (H-T-H motif). Positions 118–138 (RKRASQFFERLETQIRQALKE) form a coiled coil.

It belongs to the nucleoid occlusion factor SlmA family. In terms of assembly, homodimer. Interacts with FtsZ.

The protein localises to the cytoplasm. It is found in the nucleoid. Its function is as follows. Required for nucleoid occlusion (NO) phenomenon, which prevents Z-ring formation and cell division over the nucleoid. Acts as a DNA-associated cell division inhibitor that binds simultaneously chromosomal DNA and FtsZ, and disrupts the assembly of FtsZ polymers. SlmA-DNA-binding sequences (SBS) are dispersed on non-Ter regions of the chromosome, preventing FtsZ polymerization at these regions. The protein is Nucleoid occlusion factor SlmA of Marinobacter nauticus (strain ATCC 700491 / DSM 11845 / VT8) (Marinobacter aquaeolei).